A 382-amino-acid chain; its full sequence is Myb-like transcription factor (382 aa).

Myb-like domains follow at residues 1-57 (MPRS…RWSK), 58-108 (ITGA…QHCL), and 109-160 (DPSL…ITLF). Residues 194–210 (MSMDASEDGDDAEDDQT) are compositionally biased toward acidic residues. The segment at 194–240 (MSMDASEDGDDAEDDQTPDSYTSISTSSFDDILGGSSSSPSAADTMT) is disordered. Positions 211 to 240 (PDSYTSISTSSFDDILGGSSSSPSAADTMT) are enriched in polar residues.

It localises to the nucleus. Functionally, transcription factor; part of the gene cluster that mediates the biosynthesis of 1233A, a natural compound known as an inhibitor of HMG-CoA synthase in the mevalonate pathway and with antibacterial and antifungal activities. Involved in hygromycin B-induced transcriptional control of the cluster. In Fusarium sp, this protein is Myb-like transcription factor.